The sequence spans 88 residues: Conotoxin Gm9.1 (88 aa).

Residues 1 to 27 (MHLSLARSAVLMLLLLFALGNFVVVQS) form the signal peptide. Residues 28-58 (GLITRDVDNGQLTDNRRNLQTEWNPLSLFMS) constitute a propeptide that is removed on maturation. 3 disulfide bridges follow: cysteine 62/cysteine 76, cysteine 66/cysteine 78, and cysteine 72/cysteine 83. At asparagine 87 the chain carries Asparagine amide.

It belongs to the conotoxin P superfamily. Expressed by the venom duct.

The protein resides in the secreted. In terms of biological role, neurotoxin. In vivo, elicits 'spasmodic' symptomatology. The polypeptide is Conotoxin Gm9.1 (Conus gloriamaris (Glory-of-the-Sea cone)).